A 241-amino-acid polypeptide reads, in one-letter code: Phosphoribosylformylglycinamidine synthase subunit PurQ (241 aa).

One can recognise a Glutamine amidotransferase type-1 domain in the interval 6–241 (NVGIVVFPGS…QSLLLASAFA (236 aa)). The Nucleophile role is filled by Cys-90. Active-site residues include His-207 and Glu-209.

Part of the FGAM synthase complex composed of 1 PurL, 1 PurQ and 2 PurS subunits.

The protein resides in the cytoplasm. The enzyme catalyses N(2)-formyl-N(1)-(5-phospho-beta-D-ribosyl)glycinamide + L-glutamine + ATP + H2O = 2-formamido-N(1)-(5-O-phospho-beta-D-ribosyl)acetamidine + L-glutamate + ADP + phosphate + H(+). The catalysed reaction is L-glutamine + H2O = L-glutamate + NH4(+). It functions in the pathway purine metabolism; IMP biosynthesis via de novo pathway; 5-amino-1-(5-phospho-D-ribosyl)imidazole from N(2)-formyl-N(1)-(5-phospho-D-ribosyl)glycinamide: step 1/2. In terms of biological role, part of the phosphoribosylformylglycinamidine synthase complex involved in the purines biosynthetic pathway. Catalyzes the ATP-dependent conversion of formylglycinamide ribonucleotide (FGAR) and glutamine to yield formylglycinamidine ribonucleotide (FGAM) and glutamate. The FGAM synthase complex is composed of three subunits. PurQ produces an ammonia molecule by converting glutamine to glutamate. PurL transfers the ammonia molecule to FGAR to form FGAM in an ATP-dependent manner. PurS interacts with PurQ and PurL and is thought to assist in the transfer of the ammonia molecule from PurQ to PurL. In Thermosynechococcus vestitus (strain NIES-2133 / IAM M-273 / BP-1), this protein is Phosphoribosylformylglycinamidine synthase subunit PurQ.